The primary structure comprises 539 residues: MNRRNLLKASMALAAYGSVSASGLFAARALAAAADGEIEHFDFAELQAHAKKLASKGYVSNKQVLPPVLANMTPQQFNAIRYDPNHSLWKDVHGQLDVHFFHVGMGFKTPVRMYSVDPQSKQAREVHFRHDLFNYENSGIDKNLVKGDLGFAGFKLFKAPEIAINDVVSFLGASYFRAVDSNKQYGLSARGLAIDSYAKRQEEFPDFTKFWFETPDKNATRFVVYALLDSPSATGAYRFDIDCQAGQVVMEIDAHVNARTDIQQLGISPMTSMFSCGTHERRMCDTIHPQIHDSDRLSMWRGNGEWICRPLNNPAKPQFSAFSDTDPKGFGLVQSDHEFSSYQDTVVWYSRRPSLWVEPITAWGEGEVSLLELPTTGETMDNIVVFWTPKTPVKAGDSMNYGYKLFWSPLPPVSTPLAQVHATRSGMGGFLEGWAPGEHYPTTWARRFAVDFNGGGLDRLPEGTGIEPIVTVTHGKVQDFNILVLPDIKGYRVTFDWVPDSDSVEPVEMRMFIRTGDRTLSETWLYQYFPPAPDKRKYP.

A signal peptide (tat-type signal) is located at residues 1–29 (MNRRNLLKASMALAAYGSVSASGLFAARA).

It belongs to the OpgD/OpgG family. Predicted to be exported by the Tat system. The position of the signal peptide cleavage has not been experimentally proven.

Its subcellular location is the periplasm. It functions in the pathway glycan metabolism; osmoregulated periplasmic glucan (OPG) biosynthesis. In terms of biological role, probably involved in the control of the structural glucose backbone of osmoregulated periplasmic glucans (OPGs). The sequence is that of Glucans biosynthesis protein D from Pseudomonas syringae pv. syringae (strain B728a).